A 391-amino-acid chain; its full sequence is 4-coumarate--CoA ligase (391 aa).

This sequence belongs to the ATP-dependent AMP-binding enzyme family.

It catalyses the reaction (E)-4-coumarate + ATP + CoA = (E)-4-coumaroyl-CoA + AMP + diphosphate. Its function is as follows. Converts p-coumaric acid into p-coumaryl CoA. This is necessary for the activation of the photoactive yellow protein (PYP) chromophore. The sequence is that of 4-coumarate--CoA ligase (pcl) from Halorhodospira halophila (Ectothiorhodospira halophila).